The following is a 246-amino-acid chain: Ribosomal RNA small subunit methyltransferase J (246 aa).

Residues 115–116 (ER) and Asp169 contribute to the S-adenosyl-L-methionine site.

The protein belongs to the methyltransferase superfamily. RsmJ family.

The protein localises to the cytoplasm. The enzyme catalyses guanosine(1516) in 16S rRNA + S-adenosyl-L-methionine = N(2)-methylguanosine(1516) in 16S rRNA + S-adenosyl-L-homocysteine + H(+). Specifically methylates the guanosine in position 1516 of 16S rRNA. This is Ribosomal RNA small subunit methyltransferase J from Buchnera aphidicola subsp. Acyrthosiphon pisum (strain 5A).